The chain runs to 668 residues: tRNA 5-methylaminomethyl-2-thiouridine biosynthesis bifunctional protein MnmC (668 aa).

A tRNA (mnm(5)s(2)U34)-methyltransferase region spans residues Met1–Glu245. Residues Ile270 to Gly668 form an FAD-dependent cmnm(5)s(2)U34 oxidoreductase region.

This sequence in the N-terminal section; belongs to the methyltransferase superfamily. tRNA (mnm(5)s(2)U34)-methyltransferase family. The protein in the C-terminal section; belongs to the DAO family. The cofactor is FAD.

Its subcellular location is the cytoplasm. The enzyme catalyses 5-aminomethyl-2-thiouridine(34) in tRNA + S-adenosyl-L-methionine = 5-methylaminomethyl-2-thiouridine(34) in tRNA + S-adenosyl-L-homocysteine + H(+). Functionally, catalyzes the last two steps in the biosynthesis of 5-methylaminomethyl-2-thiouridine (mnm(5)s(2)U) at the wobble position (U34) in tRNA. Catalyzes the FAD-dependent demodification of cmnm(5)s(2)U34 to nm(5)s(2)U34, followed by the transfer of a methyl group from S-adenosyl-L-methionine to nm(5)s(2)U34, to form mnm(5)s(2)U34. This Escherichia coli O9:H4 (strain HS) protein is tRNA 5-methylaminomethyl-2-thiouridine biosynthesis bifunctional protein MnmC.